The primary structure comprises 104 residues: Integration host factor subunit alpha (104 aa).

It belongs to the bacterial histone-like protein family. As to quaternary structure, heterodimer of an alpha and a beta chain.

This protein is one of the two subunits of integration host factor, a specific DNA-binding protein that functions in genetic recombination as well as in transcriptional and translational control. This chain is Integration host factor subunit alpha, found in Methylobacterium sp. (strain 4-46).